Here is a 219-residue protein sequence, read N- to C-terminus: Ribosomal RNA small subunit methyltransferase G (219 aa).

Positions 81, 86, and 150 each coordinate S-adenosyl-L-methionine.

The protein belongs to the methyltransferase superfamily. RNA methyltransferase RsmG family.

It is found in the cytoplasm. It catalyses the reaction guanosine(527) in 16S rRNA + S-adenosyl-L-methionine = N(7)-methylguanosine(527) in 16S rRNA + S-adenosyl-L-homocysteine. Specifically methylates the N7 position of guanine in position 527 of 16S rRNA. This is Ribosomal RNA small subunit methyltransferase G from Magnetococcus marinus (strain ATCC BAA-1437 / JCM 17883 / MC-1).